The following is a 435-amino-acid chain: Serine hydroxymethyltransferase (435 aa).

(6S)-5,6,7,8-tetrahydrofolate contacts are provided by residues L133 and 137–139; that span reads GHL. K242 is subject to N6-(pyridoxal phosphate)lysine.

It belongs to the SHMT family. Homodimer. It depends on pyridoxal 5'-phosphate as a cofactor.

The protein localises to the cytoplasm. The enzyme catalyses (6R)-5,10-methylene-5,6,7,8-tetrahydrofolate + glycine + H2O = (6S)-5,6,7,8-tetrahydrofolate + L-serine. It functions in the pathway one-carbon metabolism; tetrahydrofolate interconversion. It participates in amino-acid biosynthesis; glycine biosynthesis; glycine from L-serine: step 1/1. Its function is as follows. Catalyzes the reversible interconversion of serine and glycine with tetrahydrofolate (THF) serving as the one-carbon carrier. This reaction serves as the major source of one-carbon groups required for the biosynthesis of purines, thymidylate, methionine, and other important biomolecules. Also exhibits THF-independent aldolase activity toward beta-hydroxyamino acids, producing glycine and aldehydes, via a retro-aldol mechanism. This is Serine hydroxymethyltransferase from Sphingopyxis alaskensis (strain DSM 13593 / LMG 18877 / RB2256) (Sphingomonas alaskensis).